The primary structure comprises 442 residues: tRNA modification GTPase MnmE (442 aa).

Positions 21, 79, and 118 each coordinate (6S)-5-formyl-5,6,7,8-tetrahydrofolate. The TrmE-type G domain maps to 214–367 (GFKIAIVGKP…LKEELQNYLN (154 aa)). Asn224 contributes to the K(+) binding site. Residues 224-229 (NVGKSS), 243-249 (SDIAGTT), and 268-271 (DTAG) each bind GTP. A Mg(2+)-binding site is contributed by Ser228. The K(+) site is built by Ser243, Ile245, and Thr248. A Mg(2+)-binding site is contributed by Thr249. (6S)-5-formyl-5,6,7,8-tetrahydrofolate is bound at residue Lys442.

It belongs to the TRAFAC class TrmE-Era-EngA-EngB-Septin-like GTPase superfamily. TrmE GTPase family. As to quaternary structure, homodimer. Heterotetramer of two MnmE and two MnmG subunits. K(+) serves as cofactor.

The protein resides in the cytoplasm. In terms of biological role, exhibits a very high intrinsic GTPase hydrolysis rate. Involved in the addition of a carboxymethylaminomethyl (cmnm) group at the wobble position (U34) of certain tRNAs, forming tRNA-cmnm(5)s(2)U34. This Campylobacter jejuni subsp. jejuni serotype O:23/36 (strain 81-176) protein is tRNA modification GTPase MnmE.